The following is a 153-amino-acid chain: Large ribosomal subunit protein uL15 (153 aa).

A disordered region spans residues 21–40 (RGIGSGKGKTGGRGIKGQKS). A compositionally biased stretch (gly residues) spans 23-35 (IGSGKGKTGGRGI).

This sequence belongs to the universal ribosomal protein uL15 family. As to quaternary structure, part of the 50S ribosomal subunit.

Its function is as follows. Binds to the 23S rRNA. This chain is Large ribosomal subunit protein uL15, found in Rickettsia canadensis (strain McKiel).